The primary structure comprises 494 residues: uncharacterized protein (494 aa).

This is an uncharacterized protein from Acanthamoeba polyphaga (Amoeba).